The following is a 519-amino-acid chain: 2,3-bisphosphoglycerate-independent phosphoglycerate mutase (519 aa).

Positions 9 and 60 each coordinate Mn(2+). The Phosphoserine intermediate role is filled by S60. Residues 76–91 show a composition bias toward basic and acidic residues; the sequence is DSARVSDSIARSRGEA. The disordered stretch occupies residues 76-102; the sequence is DSARVSDSIARSRGEAPPDDDAQDPPF. Residues H134, 163–164, R195, R201, 267–270, and K341 contribute to the substrate site; these read RD and RSDR. Residues D408, H412, D449, H450, and H466 each contribute to the Mn(2+) site.

This sequence belongs to the BPG-independent phosphoglycerate mutase family. Requires Mn(2+) as cofactor.

The enzyme catalyses (2R)-2-phosphoglycerate = (2R)-3-phosphoglycerate. The protein operates within carbohydrate degradation; glycolysis; pyruvate from D-glyceraldehyde 3-phosphate: step 3/5. Its function is as follows. Catalyzes the interconversion of 2-phosphoglycerate and 3-phosphoglycerate. The chain is 2,3-bisphosphoglycerate-independent phosphoglycerate mutase from Haloarcula marismortui (strain ATCC 43049 / DSM 3752 / JCM 8966 / VKM B-1809) (Halobacterium marismortui).